A 126-amino-acid chain; its full sequence is Small ribosomal subunit protein uS13 (126 aa).

Positions 92–126 are disordered; the sequence is HRRGLPVRGQRTKTNARTRKGPKKTVAGKKKATRK.

This sequence belongs to the universal ribosomal protein uS13 family. In terms of assembly, part of the 30S ribosomal subunit. Forms a loose heterodimer with protein S19. Forms two bridges to the 50S subunit in the 70S ribosome.

Its function is as follows. Located at the top of the head of the 30S subunit, it contacts several helices of the 16S rRNA. In the 70S ribosome it contacts the 23S rRNA (bridge B1a) and protein L5 of the 50S subunit (bridge B1b), connecting the 2 subunits; these bridges are implicated in subunit movement. Contacts the tRNAs in the A and P-sites. The polypeptide is Small ribosomal subunit protein uS13 (Deinococcus deserti (strain DSM 17065 / CIP 109153 / LMG 22923 / VCD115)).